The primary structure comprises 1265 residues: 1-phosphatidylinositol 4,5-bisphosphate phosphodiesterase gamma-2 (1265 aa).

Residues 20 to 131 form the PH domain; that stretch reads RALELGTVMT…WLSGLKILHQ (112 aa). In terms of domain architecture, PI-PLC X-box spans 312 to 456; it reads QDMNNPLSHY…LREKIIIKHK (145 aa). Catalysis depends on residues His327 and His372. SH2 domains are found at residues 532–635 and 646–735; these read WFHK…TDPV and WYYD…RYPV. Phosphotyrosine; by BTK occurs at positions 753 and 759. The 61-residue stretch at 769 to 829 folds into the SH3 domain; it reads MPQRTVKALY…PSNYVEDISA (61 aa). Residues 930-1044 form the PI-PLC Y-box domain; that stretch reads LSDLVVYCKP…GYVLQPESMR (115 aa). Residues 1038–1169 form the C2 domain; that stretch reads LQPESMRSEK…SGFRSVPLKN (132 aa). Tyr1197 is subject to Phosphotyrosine; by BTK. Phosphotyrosine is present on residues Tyr1217 and Tyr1245.

Part of a complex composed of EEIG1, TNFRSF11A/RANK, PLCG2, GAB2, TEC and BTK; complex formation increases in the presence of TNFSF11/RANKL. Interacts (via SH2 domain) with CSF1R (tyrosine phosphorylated). Interacts constitutively with THEMIS2. The cofactor is Ca(2+). In terms of processing, phosphorylated on tyrosine residues by CSF1R. Phosphorylated on tyrosine residues by BTK and SYK; upon ligand-induced activation of a variety of growth factor receptors and immune system receptors. Phosphorylation leads to increased phospholipase activity.

It localises to the membrane raft. It carries out the reaction a 1,2-diacyl-sn-glycero-3-phospho-(1D-myo-inositol-4,5-bisphosphate) + H2O = 1D-myo-inositol 1,4,5-trisphosphate + a 1,2-diacyl-sn-glycerol + H(+). In terms of biological role, the production of the second messenger molecules diacylglycerol (DAG) and inositol 1,4,5-trisphosphate (IP3) is mediated by activated phosphatidylinositol-specific phospholipase C enzymes. It is a crucial enzyme in transmembrane signaling. This is 1-phosphatidylinositol 4,5-bisphosphate phosphodiesterase gamma-2 from Rattus norvegicus (Rat).